The chain runs to 266 residues: MDFVAKNLTKLRETNPLVQNITNYVVMNSTANSLLALGASPVMAHAMDELEEMVSIASALVVNIGTLDEYWIPSMEKAAKIASDLKKPIILDPVGAGATKLRTKTALKILDFADISVLRGNFGEIAAVLGEHGKTRGVDSAAYDSNEAIELSKNAAKEFNTVSAVTGPVDYVSNGKEIYAISNGHPMLSKVTGTGCASTSIIGAFSAVDEPLKAAVSGLTVYGISAEMAFSEAPYPGTFQAKVYDWLYRIDEKLVFEKAKVNKFEI.

Methionine 43 serves as a coordination point for substrate. ATP contacts are provided by arginine 119 and threonine 166. Glycine 193 contacts substrate.

It belongs to the Thz kinase family. Mg(2+) is required as a cofactor.

It catalyses the reaction 5-(2-hydroxyethyl)-4-methylthiazole + ATP = 4-methyl-5-(2-phosphooxyethyl)-thiazole + ADP + H(+). The protein operates within cofactor biosynthesis; thiamine diphosphate biosynthesis; 4-methyl-5-(2-phosphoethyl)-thiazole from 5-(2-hydroxyethyl)-4-methylthiazole: step 1/1. Functionally, catalyzes the phosphorylation of the hydroxyl group of 4-methyl-5-beta-hydroxyethylthiazole (THZ). In Methanococcus maripaludis (strain C5 / ATCC BAA-1333), this protein is Hydroxyethylthiazole kinase.